Reading from the N-terminus, the 641-residue chain is MAAKSDGGGVGVGFAQLHNLDEAVGSGGEEDGEPGGGGCGGGGDGSEPGESSSMHICHCCNTSSCYWGCRSACLRSLLGRKPRRSAAADGGDQPLQPPAAPGAGRQPPTPSAARPEPPPPQVERPWLDCLWIVLALLVFFGDVGTDLWLALDYYRKGDYVYFGLTLFFVLVPSLLVQSLSFRWFVQDYTGGGLGAVEGLTSRGPPMMGAGYVHGAARGGPGVRVSPTPGAQRLCRLSVWIWQSVIHLLQMGQVWRYIRTMYLGIQSQRRKEHQRRFYWAMMYEYADVNMLRLLETFLESAPQLVLQLYIMLQKNSAETLPCVSSVTSLMSLAWVLASYHKLLRDSRDDKKSMSYRGAIIQVFWRLFTISSRVISFALFASIFQLYFGIFVVVHWCAMAFWIIHGGTDFCMSKWEEILFNMVVGIVYIFCWFNVKEGRTRYRMFAYYTIVLTENAALTFLWYFYRDPETTDSYAVPALCCVFISFVAGIAMMLLYYGVLHPTGPRAKILASSCCAELLWGIPLPPDVEPMAPEIPGYRGTQVTPTRAVTEQQEDLTADTCLPVFQVRPMGPPTPLGRPYLPEGPLIKIDMPRKRYPAWDAHFVDRRLRRTINILQYVTPTAVGIRYRDGPLLYELLQYESSL.

Disordered regions lie at residues 20-47 and 84-120; these read LDEAVGSGGEEDGEPGGGGCGGGGDGSE and RSAAADGGDQPLQPPAAPGAGRQPPTPSAARPEPPPP. A compositionally biased stretch (gly residues) spans 34–46; the sequence is PGGGGCGGGGDGS. Pro residues predominate over residues 107–120; the sequence is PPTPSAARPEPPPP. 7 helical membrane-spanning segments follow: residues 130 to 150, 159 to 179, 318 to 338, 372 to 392, 413 to 433, 442 to 462, and 473 to 493; these read LWIVLALLVFFGDVGTDLWLA, YVYFGLTLFFVLVPSLLVQSL, TLPCVSSVTSLMSLAWVLASY, VISFALFASIFQLYFGIFVVV, WEEILFNMVVGIVYIFCWFNV, MFAYYTIVLTENAALTFLWYF, and AVPALCCVFISFVAGIAMMLL.

Belongs to the XK family.

The protein localises to the cell membrane. The protein is XK-related protein 6 of Homo sapiens (Human).